A 278-amino-acid polypeptide reads, in one-letter code: Large ribosomal subunit protein uL2 (278 aa).

A disordered region spans residues 223–278 (GSVMNPNDHPHGGGEGKAPIGHPSPMSPWGKKTLGKKTRDHKAKSEKFIVRHRRAK). A compositionally biased stretch (basic residues) spans 255–264 (TLGKKTRDHK).

This sequence belongs to the universal ribosomal protein uL2 family. Part of the 50S ribosomal subunit. Forms a bridge to the 30S subunit in the 70S ribosome.

In terms of biological role, one of the primary rRNA binding proteins. Required for association of the 30S and 50S subunits to form the 70S ribosome, for tRNA binding and peptide bond formation. It has been suggested to have peptidyltransferase activity; this is somewhat controversial. Makes several contacts with the 16S rRNA in the 70S ribosome. This Lacticaseibacillus paracasei (strain ATCC 334 / BCRC 17002 / CCUG 31169 / CIP 107868 / KCTC 3260 / NRRL B-441) (Lactobacillus paracasei) protein is Large ribosomal subunit protein uL2.